A 113-amino-acid polypeptide reads, in one-letter code: Hydrogenase maturation factor HypA (113 aa).

A Ni(2+)-binding site is contributed by His-2. Residues Cys-73, Cys-76, Cys-89, and Cys-92 each contribute to the Zn(2+) site.

The protein belongs to the HypA/HybF family.

Functionally, involved in the maturation of [NiFe] hydrogenases. Required for nickel insertion into the metal center of the hydrogenase. The sequence is that of Hydrogenase maturation factor HypA from Chlorobaculum tepidum (strain ATCC 49652 / DSM 12025 / NBRC 103806 / TLS) (Chlorobium tepidum).